The primary structure comprises 290 residues: Inorganic pyrophosphatase (290 aa).

Arg81 contributes to the diphosphate binding site. 3 residues coordinate Mg(2+): Asp118, Asp123, and Asp155.

This sequence belongs to the PPase family. Requires Mg(2+) as cofactor.

The protein resides in the cytoplasm. The catalysed reaction is diphosphate + H2O = 2 phosphate + H(+). The protein is Inorganic pyrophosphatase (ipp-1) of Neurospora crassa (strain ATCC 24698 / 74-OR23-1A / CBS 708.71 / DSM 1257 / FGSC 987).